Consider the following 447-residue polypeptide: Enolase (447 aa).

Glutamine 168 is a binding site for (2R)-2-phosphoglycerate. Catalysis depends on glutamate 210, which acts as the Proton donor. 3 residues coordinate Mg(2+): aspartate 247, glutamate 292, and aspartate 319. Positions 344, 373, 374, and 395 each coordinate (2R)-2-phosphoglycerate. Residue lysine 344 is the Proton acceptor of the active site.

It belongs to the enolase family. In terms of assembly, component of the RNA degradosome, a multiprotein complex involved in RNA processing and mRNA degradation. Requires Mg(2+) as cofactor.

It is found in the cytoplasm. It localises to the secreted. The protein resides in the cell surface. The enzyme catalyses (2R)-2-phosphoglycerate = phosphoenolpyruvate + H2O. Its pathway is carbohydrate degradation; glycolysis; pyruvate from D-glyceraldehyde 3-phosphate: step 4/5. Its function is as follows. Catalyzes the reversible conversion of 2-phosphoglycerate (2-PG) into phosphoenolpyruvate (PEP). It is essential for the degradation of carbohydrates via glycolysis. The chain is Enolase from Blochmanniella floridana.